The chain runs to 242 residues: Octanoyltransferase (242 aa).

Positions serine 31 to glutamine 206 constitute a BPL/LPL catalytic domain. Substrate contacts are provided by residues arginine 70–histidine 77, serine 137–glycine 139, and glycine 150–alanine 152. Cysteine 168 acts as the Acyl-thioester intermediate in catalysis.

Belongs to the LipB family.

It is found in the cytoplasm. The enzyme catalyses octanoyl-[ACP] + L-lysyl-[protein] = N(6)-octanoyl-L-lysyl-[protein] + holo-[ACP] + H(+). The protein operates within protein modification; protein lipoylation via endogenous pathway; protein N(6)-(lipoyl)lysine from octanoyl-[acyl-carrier-protein]: step 1/2. Its function is as follows. Catalyzes the transfer of endogenously produced octanoic acid from octanoyl-acyl-carrier-protein onto the lipoyl domains of lipoate-dependent enzymes. Lipoyl-ACP can also act as a substrate although octanoyl-ACP is likely to be the physiological substrate. This chain is Octanoyltransferase, found in Coxiella burnetii (strain CbuG_Q212) (Coxiella burnetii (strain Q212)).